The sequence spans 233 residues: Orotidine 5'-phosphate decarboxylase (233 aa).

Residues aspartate 12, lysine 34, 61-70 (DWKLHDIGAT), threonine 116, arginine 181, glutamine 190, glycine 210, and arginine 211 each bind substrate. The Proton donor role is filled by lysine 63.

It belongs to the OMP decarboxylase family. Type 1 subfamily. As to quaternary structure, homodimer.

It catalyses the reaction orotidine 5'-phosphate + H(+) = UMP + CO2. It participates in pyrimidine metabolism; UMP biosynthesis via de novo pathway; UMP from orotate: step 2/2. Its function is as follows. Catalyzes the decarboxylation of orotidine 5'-monophosphate (OMP) to uridine 5'-monophosphate (UMP). The protein is Orotidine 5'-phosphate decarboxylase of Caulobacter vibrioides (strain ATCC 19089 / CIP 103742 / CB 15) (Caulobacter crescentus).